A 554-amino-acid polypeptide reads, in one-letter code: Zinc finger protein 426 (554 aa).

Positions 42–112 constitute a KRAB domain; that stretch reads VTFDDVAVDF…QGGVLQGWEM (71 aa). The segment at 146 to 174 adopts a C2H2-type 1; atypical zinc-finger fold; that stretch reads CDCEQCGEVFSEHSCLKTHVRTQSTGNTH. 11 consecutive C2H2-type zinc fingers follow at residues 224 to 246, 280 to 302, 308 to 330, 336 to 358, 364 to 386, 392 to 414, 420 to 442, 448 to 470, 476 to 498, 504 to 526, and 532 to 554; these read FECS…MRTH, YKCK…MRTH, YECK…GRTH, YVCK…VRSH, YECK…IRTH, FVCV…LRTH, CECK…MRTH, YTCK…MRIH, YECK…ERTH, YECK…EKTH, and YKCQ…EQIH.

Its subcellular location is the nucleus. Its function is as follows. May be involved in transcriptional regulation. The protein is Zinc finger protein 426 (ZNF426) of Homo sapiens (Human).